A 219-amino-acid chain; its full sequence is DnaJ homolog subfamily C member 30, mitochondrial (219 aa).

A mitochondrion-targeting transit peptide spans 1–38 (MAAARCLGWTLSPLWRWWQVRGLPPSSATGLCSRGRTY). The J domain maps to 42–107 (ALYELLGVPS…ILRRKYDRGL (66 aa)). The disordered stretch occupies residues 109–148 (SDQDLRGPGVKPSKTPVADPAPPRPPPYTPRAPGGSRASP). The segment covering 127 to 138 (DPAPPRPPPYTP) has biased composition (pro residues). A helical membrane pass occupies residues 202–218 (ATFFVVLFLIFVFVGFR).

In terms of assembly, associates with the ATP synthase complex. Interacts with MT-ATP6; interaction is direct. Interacts with ATP5MC2; interaction is direct. In terms of tissue distribution, in brain, expressed in gray matter structures.

It is found in the mitochondrion inner membrane. Mitochondrial protein enriched in neurons that acts as a regulator of mitochondrial respiration. Associates with the ATP synthase complex and facilitates ATP synthesis. May be a chaperone protein involved in the turnover of the subunits of mitochondrial complex I N-module. It facilitates the degradation of N-module subunits damaged by oxidative stress, and contributes to complex I functional efficiency. This is DnaJ homolog subfamily C member 30, mitochondrial from Mus musculus (Mouse).